Here is a 637-residue protein sequence, read N- to C-terminus: Choline O-acetyltransferase (637 aa).

A compositionally biased stretch (basic and acidic residues) spans 1–13 (MPVSKREQSKDTG). A disordered region spans residues 1–20 (MPVSKREQSKDTGDPCALPK). The active-site Proton acceptor is H329. CoA contacts are provided by residues 407–419 (GKEF…MSPD), S445, and Q545.

Belongs to the carnitine/choline acetyltransferase family.

The catalysed reaction is choline + acetyl-CoA = acetylcholine + CoA. Its function is as follows. Catalyzes the reversible synthesis of acetylcholine (ACh) from acetyl CoA and choline at cholinergic synapses. This chain is Choline O-acetyltransferase (chat), found in Danio rerio (Zebrafish).